A 573-amino-acid polypeptide reads, in one-letter code: SHC-transforming protein 2 (573 aa).

Positions 125-307 constitute a PID domain; the sequence is LGPGVSYIVR…TGLEESAWGD (183 aa). Residues 478-569 form the SH2 domain; it reads WYHGRMSRRA…ESELHLRGVV (92 aa).

As to quaternary structure, interacts with the Trk receptors in a phosphotyrosine-dependent manner and MEGF12. Once activated, binds to GRB2. Post-translationally, phosphorylated on tyrosine by the Trk receptors.

Signaling adapter that couples activated growth factor receptors to signaling pathway in neurons. Involved in the signal transduction pathways of neurotrophin-activated Trk receptors in cortical neurons. This is SHC-transforming protein 2 (Shc2) from Rattus norvegicus (Rat).